A 335-amino-acid polypeptide reads, in one-letter code: Serpentine receptor class alpha-13 (335 aa).

Residues 1-22 are Extracellular-facing; the sequence is MAIVSSENRTCADEKLLALYQS. A helical membrane pass occupies residues 23–43; the sequence is WSYIASIVFNCLVPTISTYFL. Residues 44–61 are Cytoplasmic-facing; that stretch reads GRAIFQLCNQATIQYSTR. The chain crosses the membrane as a helical span at residues 62 to 82; sequence ILLIATILFAACHQVSYFAFK. Over 83-107 the chain is Extracellular; the sequence is IDLLHTMFFKLDQPCFLQRSSYDCR. A helical membrane pass occupies residues 108–128; that stretch reads FISIAQTTGVVGMALTGLAMS. Residues 129–149 are Cytoplasmic-facing; sequence TDRALALTFPADYHKLKSVPR. A helical membrane pass occupies residues 150–170; the sequence is VVLSVFVFIVSFSTWFLLTMN. The Extracellular portion of the chain corresponds to 171–192; the sequence is DPLTGYLNHCGFYPSYSVANFQ. A helical membrane pass occupies residues 193-213; the sequence is LMLDVILYLAIFNLIWDVILF. Residues 214 to 235 are Cytoplasmic-facing; it reads YYARQQILWRRSYQFQKRYEAR. Residues 236 to 255 traverse the membrane as a helical segment; the sequence is ISLNCTQAVFVISICQCISN. Over 256–278 the chain is Extracellular; sequence GANSGLMRLLMMIGTSITSVTYS. The helical transmembrane segment at 279 to 299 threads the bilayer; it reads SLLSLFYTAPYSCILLPILMM. Over 300–335 the chain is Cytoplasmic; that stretch reads RISEYIREQRTIGILSLRSEKPGLEEHHQRMRAAWS.

It belongs to the nematode receptor-like protein sra family.

Its subcellular location is the membrane. In terms of biological role, chemosensory receptor that negatively regulates RAS/MAPK signaling during vulva induction and the negative regulation of olfaction of volitile attractants. Required for the suppression of vulval induction in response to food starvation. Signaling acts through the GPA-5 G-alpha protein subunit. This Caenorhabditis briggsae protein is Serpentine receptor class alpha-13.